The following is a 588-amino-acid chain: Sperm-associated microtubule inner protein 4 (588 aa).

Thr219 carries the phosphothreonine modification. Ser406, Ser421, and Ser427 each carry phosphoserine. Tyr441 carries the phosphotyrosine modification. Ser457, Ser484, and Ser516 each carry phosphoserine.

In terms of tissue distribution, predominantly expressed in the testes.

The protein resides in the cytoplasm. Its subcellular location is the cytoskeleton. It is found in the microtubule organizing center. It localises to the centrosome. The protein localises to the flagellum axoneme. Its function is as follows. Microtubule inner protein (MIP) part of the dynein-decorated doublet microtubules (DMTs) in flagellum axoneme. May serve to reinforce and thus stabilize the microtubule structure in the sperm flagella. This chain is Sperm-associated microtubule inner protein 4 (Spmip4), found in Mus musculus (Mouse).